A 101-amino-acid chain; its full sequence is UPF0235 protein Cphamn1_2066 (101 aa).

Belongs to the UPF0235 family.

The sequence is that of UPF0235 protein Cphamn1_2066 from Chlorobium phaeobacteroides (strain BS1).